The sequence spans 239 residues: UDP-2,3-diacylglucosamine hydrolase (239 aa).

Residues Asp8, His10, Asp41, Asn78, and His113 each coordinate Mn(2+). A substrate-binding site is contributed by 78–79; the sequence is NR. Substrate-binding residues include Asp121, Ser159, Asn163, Lys166, and His194. 2 residues coordinate Mn(2+): His194 and His196.

The protein belongs to the LpxH family. Requires Mn(2+) as cofactor.

The protein resides in the cell inner membrane. The catalysed reaction is UDP-2-N,3-O-bis[(3R)-3-hydroxytetradecanoyl]-alpha-D-glucosamine + H2O = 2-N,3-O-bis[(3R)-3-hydroxytetradecanoyl]-alpha-D-glucosaminyl 1-phosphate + UMP + 2 H(+). It participates in glycolipid biosynthesis; lipid IV(A) biosynthesis; lipid IV(A) from (3R)-3-hydroxytetradecanoyl-[acyl-carrier-protein] and UDP-N-acetyl-alpha-D-glucosamine: step 4/6. Its function is as follows. Hydrolyzes the pyrophosphate bond of UDP-2,3-diacylglucosamine to yield 2,3-diacylglucosamine 1-phosphate (lipid X) and UMP by catalyzing the attack of water at the alpha-P atom. Involved in the biosynthesis of lipid A, a phosphorylated glycolipid that anchors the lipopolysaccharide to the outer membrane of the cell. The polypeptide is UDP-2,3-diacylglucosamine hydrolase (Shewanella sp. (strain ANA-3)).